A 365-amino-acid polypeptide reads, in one-letter code: Phosphopantothenate--cysteine ligase CAB2 (365 aa).

Residues 228 to 250 (QSGDNGKMGANNDTEGTTRTTPD) are disordered. Over residues 238-248 (NNDTEGTTRTT) the composition is skewed to polar residues.

Belongs to the PPC synthetase family. In terms of assembly, homodimer.

Its subcellular location is the cytoplasm. The protein localises to the nucleus. It carries out the reaction (R)-4'-phosphopantothenate + L-cysteine + CTP = N-[(R)-4-phosphopantothenoyl]-L-cysteine + CMP + diphosphate + H(+). It functions in the pathway cofactor biosynthesis; coenzyme A biosynthesis; CoA from (R)-pantothenate: step 2/5. Its function is as follows. Catalyzes the first step in the biosynthesis of coenzyme A from vitamin B5, where cysteine is conjugated to 4'-phosphopantothenate to form 4-phosphopantothenoylcysteine. The polypeptide is Phosphopantothenate--cysteine ligase CAB2 (CAB2) (Saccharomyces cerevisiae (strain ATCC 204508 / S288c) (Baker's yeast)).